A 72-amino-acid polypeptide reads, in one-letter code: DNA-directed RNA polymerase subunit epsilon (72 aa).

The protein belongs to the RNA polymerase subunit epsilon family. RNAP is composed of a core of 2 alpha, a beta and a beta' subunit. The core is associated with a delta subunit, and at least one of epsilon or omega. When a sigma factor is associated with the core the holoenzyme is formed, which can initiate transcription.

The enzyme catalyses RNA(n) + a ribonucleoside 5'-triphosphate = RNA(n+1) + diphosphate. Its function is as follows. A non-essential component of RNA polymerase (RNAP). This is DNA-directed RNA polymerase subunit epsilon from Staphylococcus haemolyticus (strain JCSC1435).